The following is a 376-amino-acid chain: Chaperone protein DnaJ (376 aa).

A J domain is found at 5-70 (DFYEVLGVGR…DKKAAYDQFG (66 aa)). The CR-type zinc-finger motif lies at 132 to 210 (GLSKELRIPT…CHGEGRVEKS (79 aa)). C145, C148, C162, C165, C184, C187, C198, and C201 together coordinate Zn(2+). 4 CXXCXGXG motif repeats span residues 145-152 (CEPCDGSG), 162-169 (CGTCHGQG), 184-191 (CPTCHGRG), and 198-205 (CNKCHGEG).

This sequence belongs to the DnaJ family. As to quaternary structure, homodimer. The cofactor is Zn(2+).

It is found in the cytoplasm. In terms of biological role, participates actively in the response to hyperosmotic and heat shock by preventing the aggregation of stress-denatured proteins and by disaggregating proteins, also in an autonomous, DnaK-independent fashion. Unfolded proteins bind initially to DnaJ; upon interaction with the DnaJ-bound protein, DnaK hydrolyzes its bound ATP, resulting in the formation of a stable complex. GrpE releases ADP from DnaK; ATP binding to DnaK triggers the release of the substrate protein, thus completing the reaction cycle. Several rounds of ATP-dependent interactions between DnaJ, DnaK and GrpE are required for fully efficient folding. Also involved, together with DnaK and GrpE, in the DNA replication of plasmids through activation of initiation proteins. In Shewanella piezotolerans (strain WP3 / JCM 13877), this protein is Chaperone protein DnaJ.